Reading from the N-terminus, the 292-residue chain is Short chain dehydrogenase/reductase CPUR_05418 (292 aa).

NADP(+)-binding residues include Ile44 and Arg156. Residues Ser172 and Tyr186 each act as proton donor in the active site. Positions 186, 190, 221, and 223 each coordinate NADP(+). Lys190 (lowers pKa of active site Tyr) is an active-site residue.

It belongs to the short-chain dehydrogenases/reductases (SDR) family.

The protein operates within secondary metabolite biosynthesis. In terms of biological role, short chain dehydrogenase/reductase; part of the ergochrome gene cluster responsible for the typical purple-black color of the ergot sclerotia. The ergochrome gene cluster produces several ergot pigments including the yellow ergochrome secalonic acid and its derivatives, as well as the red anthraquinones endocrocin and clavorubin. The pathway begins with the synthesis of atrochrysone thioester by the polyketide synthase (PKS) CPUR_05437. The atrochrysone carboxyl ACP thioesterase CPUR_05436 then breaks the thioester bond and releases the atrochrysone carboxylic acid from CPUR_05437. The atrochrysone carboxylic acid is then converted to atrochrysone which is further transformed into emodin anthrone. The next step is performed by the anthrone oxygenase CPUR_05434 that catalyzes the oxidation of emodinanthrone to emodin. Emodin is further modified to yield monodictyphenone via several steps involving CPUR_05427, CPUR_05428, CPUR_05429 and CPUR_05430. The short chain dehydrogenase/reductase CPUR_05418 then catalyzes the C-5 ketoreduction to give the xanthone skeleton of the monomeric units. Ergochromes formation requires further dimerization steps of different xanthone units, probably catalyzed by the cytochrome P450 monooxygenase CPUR_05419. CPUR_05425, CPUR_05426 and CPUR_05431 are unique to Claviceps, thus it is likely that they are involved in further modification of xanthone units or in their dimerization. The yellow ergochromes and the red anthraquinone pigments endocrocin and clavorubin are products from the same PKS derived precursors and the latter are likely shunt products in the pathway of xanthone biosynthesis. It is proposed that atrochrysone carboxylic acid released from the PKS CPUR_05437 can also be converted to endocrocin anthrone which is further oxidized into endocrocin by CPUR_05435. Endocrocin could be then modified to clavorubin, possibly by CPUR_05423 and CPUR_05431. Clavorubin is the principal anthraquinone metabolite produced by the cluster with a much higher yield compared to endocrocin. The chain is Short chain dehydrogenase/reductase CPUR_05418 from Claviceps purpurea (strain 20.1) (Ergot fungus).